Consider the following 894-residue polypeptide: Bifunctional glutamine synthetase adenylyltransferase/adenylyl-removing enzyme (894 aa).

Residues 1 to 410 (MPANTSAAIA…HFEQVFILPS (410 aa)) form an adenylyl removase region. An adenylyl transferase region spans residues 415–894 (SHPLSELWLD…QVFEQALDFS (480 aa)).

This sequence belongs to the GlnE family. Mg(2+) serves as cofactor.

It catalyses the reaction [glutamine synthetase]-O(4)-(5'-adenylyl)-L-tyrosine + phosphate = [glutamine synthetase]-L-tyrosine + ADP. It carries out the reaction [glutamine synthetase]-L-tyrosine + ATP = [glutamine synthetase]-O(4)-(5'-adenylyl)-L-tyrosine + diphosphate. Functionally, involved in the regulation of glutamine synthetase GlnA, a key enzyme in the process to assimilate ammonia. When cellular nitrogen levels are high, the C-terminal adenylyl transferase (AT) inactivates GlnA by covalent transfer of an adenylyl group from ATP to specific tyrosine residue of GlnA, thus reducing its activity. Conversely, when nitrogen levels are low, the N-terminal adenylyl removase (AR) activates GlnA by removing the adenylyl group by phosphorolysis, increasing its activity. The regulatory region of GlnE binds the signal transduction protein PII (GlnB) which indicates the nitrogen status of the cell. The protein is Bifunctional glutamine synthetase adenylyltransferase/adenylyl-removing enzyme of Chromobacterium violaceum (strain ATCC 12472 / DSM 30191 / JCM 1249 / CCUG 213 / NBRC 12614 / NCIMB 9131 / NCTC 9757 / MK).